The primary structure comprises 140 residues: uncharacterized protein (140 aa).

Helical transmembrane passes span 63-83 and 119-139; these read LGFV…TLAT and ILLY…IFIN.

It localises to the membrane. This is an uncharacterized protein from Schizosaccharomyces pombe (strain 972 / ATCC 24843) (Fission yeast).